Reading from the N-terminus, the 336-residue chain is uncharacterized protein (336 aa).

Positions methionine 1 to alanine 33 are cleaved as a signal peptide.

This is an uncharacterized protein from Sinorhizobium fredii (strain NBRC 101917 / NGR234).